A 613-amino-acid chain; its full sequence is MMQVLLVTICLAVFPYQGSSIILESGNVNDYEIVYPQKVTALPIEAILQPEQKYEDAMQYEFEVNGEPVVLHLEKNKNLFTKDYSETHYSPDGREITTKPLIEDHCYYHGRIQNDAHSTASISACNGLKGHFKLQGETYLIEPLKIPDSEAHAVYKYENIEKEDEALKMCGVKHTNWESDEPIKEASQLFATSEQHRFRERYIEFFIVVDQRMYNKHNNDSAAIRTWIFEMLNTVNEIYLPWNIHVPLVGLEFWTQGDLINVVSSADKTLDSFGEWRRRDLLNRKAHDNAHLITAMHFDAQTLGLAYTGSMCHPKYSTGVFQDSSEINIFVAITLAHELGHNLGISHDVPSCTCQTKACIMSPYLSDQPTKLFSNCSEIQYERFLTQRNPKCMINKPLRTDIISPPVCGNGLLEREEECDCGSPENCRDPCCDAASCKLHSWVECESGECCDQCRFKRAGTLCRPARDDCDMAESCSGHSADCPIDGFHANGQPCSHNLGYCYNGKCPLTLYQCRAFLGKDVVGVQESCFQYNRLGNTYAYCRKENGRKIPCAPKDEKCGRLYCSYKSFGDYISCLPCYRANEEDKGMVDEGTKCGEGKVCSNGYCVDLNVAY.

Positions 1–20 are cleaved as a signal peptide; that stretch reads MMQVLLVTICLAVFPYQGSS. Positions 21-194 are excised as a propeptide; it reads IILESGNVND…EASQLFATSE (174 aa). Residue Gln195 is modified to Pyrrolidone carboxylic acid. The region spanning 201–397 is the Peptidase M12B domain; the sequence is RYIEFFIVVD…RNPKCMINKP (197 aa). Ca(2+) is bound at residue Glu204. Asn219 carries N-linked (GlcNAc...) asparagine glycosylation. Ca(2+) is bound at residue Asp288. 3 disulfide bridges follow: Cys312/Cys392, Cys352/Cys376, and Cys354/Cys359. His337 is a binding site for Zn(2+). Residue Glu338 is part of the active site. The Zn(2+) site is built by His341 and His347. N-linked (GlcNAc...) asparagine glycosylation occurs at Asn375. 8 residues coordinate Ca(2+): Cys392, Asn395, Val407, Asn410, Leu412, Glu414, Glu417, and Asp420. The region spanning 405–491 is the Disintegrin domain; the sequence is PPVCGNGLLE…DCPIDGFHAN (87 aa). 14 disulfides stabilise this stretch: Cys408/Cys437, Cys419/Cys432, Cys421/Cys427, Cys431/Cys454, Cys445/Cys451, Cys450/Cys476, Cys463/Cys483, Cys470/Cys502, Cys495/Cys507, Cys514/Cys564, Cys529/Cys575, Cys542/Cys552, Cys559/Cys601, and Cys595/Cys606. The D/ECD-tripeptide motif lies at 469 to 471; it reads DCD.

This sequence belongs to the venom metalloproteinase (M12B) family. P-III subfamily. P-IIIa sub-subfamily. As to quaternary structure, monomer. Zn(2+) is required as a cofactor. As to expression, expressed by the venom gland.

The protein resides in the secreted. Functionally, snake venom zinc metalloprotease that possesses high hemorrhagic activity. It inhibits collagen-induced platelet aggregation and activates prothrombin (F2). The sequence is that of Zinc metalloproteinase-disintegrin-like EoVMP2 (Svmp3-Eoc22) from Echis ocellatus (Ocellated saw-scaled viper).